The chain runs to 509 residues: ATP synthase subunit alpha (509 aa).

Residue G169–T176 coordinates ATP.

It belongs to the ATPase alpha/beta chains family. In terms of assembly, F-type ATPases have 2 components, CF(1) - the catalytic core - and CF(0) - the membrane proton channel. CF(1) has five subunits: alpha(3), beta(3), gamma(1), delta(1), epsilon(1). CF(0) has three main subunits: a(1), b(2) and c(9-12). The alpha and beta chains form an alternating ring which encloses part of the gamma chain. CF(1) is attached to CF(0) by a central stalk formed by the gamma and epsilon chains, while a peripheral stalk is formed by the delta and b chains.

The protein localises to the cell inner membrane. The catalysed reaction is ATP + H2O + 4 H(+)(in) = ADP + phosphate + 5 H(+)(out). Its function is as follows. Produces ATP from ADP in the presence of a proton gradient across the membrane. The alpha chain is a regulatory subunit. This is ATP synthase subunit alpha from Brucella suis biovar 1 (strain 1330).